The sequence spans 1361 residues: DNA-directed RNA polymerase subunit beta (1361 aa).

The protein belongs to the RNA polymerase beta chain family. As to quaternary structure, the RNAP catalytic core consists of 2 alpha, 1 beta, 1 beta' and 1 omega subunit. When a sigma factor is associated with the core the holoenzyme is formed, which can initiate transcription.

It catalyses the reaction RNA(n) + a ribonucleoside 5'-triphosphate = RNA(n+1) + diphosphate. DNA-dependent RNA polymerase catalyzes the transcription of DNA into RNA using the four ribonucleoside triphosphates as substrates. This chain is DNA-directed RNA polymerase subunit beta, found in Dichelobacter nodosus (strain VCS1703A).